The chain runs to 736 residues: Exo-oligoalginate lyase (736 aa).

The signal sequence occupies residues 1–23; the sequence is MLSVNTIKNTLLAAVLVSVPATA. Substrate-binding positions include Lys136, 146-149, Lys198, His202, and 257-260; these read QSLN and YYQR. Tyr258 functions as the Proton donor in the catalytic mechanism. His413 (proton acceptor) is an active-site residue. The Zn(2+) site is built by His415 and Asp433. Arg438 serves as a coordination point for substrate. Residue His464 participates in Zn(2+) binding. Residue Glu667 participates in substrate binding.

The protein belongs to the polysaccharide lyase 17 family. As to quaternary structure, homodimer. The cofactor is Zn(2+).

The protein localises to the periplasm. It catalyses the reaction Cleavage of 4-deoxy-alpha-L-erythro-hex-4-enopyranuronoside oligosaccharides into 4-deoxy-alpha-L-erythro-hex-4-enopyranuronate monosaccharides.. Functionally, catalyzes the depolymerization of alginate through an exolytic mode of action, via a beta-elimination mechanism. Preferentially acts on oligoalginates with degrees of polymerization higher than 2 to produce the alginate monomer, 4-deoxy-L-erythro-5-hexoseulose uronic acid. This chain is Exo-oligoalginate lyase, found in Saccharophagus degradans (strain 2-40 / ATCC 43961 / DSM 17024).